The sequence spans 145 residues: D-aminoacyl-tRNA deacylase (145 aa).

A Gly-cisPro motif, important for rejection of L-amino acids motif is present at residues 137-138 (GP).

The protein belongs to the DTD family. As to quaternary structure, homodimer.

The protein localises to the cytoplasm. The catalysed reaction is glycyl-tRNA(Ala) + H2O = tRNA(Ala) + glycine + H(+). It carries out the reaction a D-aminoacyl-tRNA + H2O = a tRNA + a D-alpha-amino acid + H(+). Functionally, an aminoacyl-tRNA editing enzyme that deacylates mischarged D-aminoacyl-tRNAs. Also deacylates mischarged glycyl-tRNA(Ala), protecting cells against glycine mischarging by AlaRS. Acts via tRNA-based rather than protein-based catalysis; rejects L-amino acids rather than detecting D-amino acids in the active site. By recycling D-aminoacyl-tRNA to D-amino acids and free tRNA molecules, this enzyme counteracts the toxicity associated with the formation of D-aminoacyl-tRNA entities in vivo and helps enforce protein L-homochirality. This Azotobacter vinelandii (strain DJ / ATCC BAA-1303) protein is D-aminoacyl-tRNA deacylase.